Here is a 239-residue protein sequence, read N- to C-terminus: Large ribosomal subunit protein uL1 (239 aa).

This sequence belongs to the universal ribosomal protein uL1 family. In terms of assembly, part of the 50S ribosomal subunit.

Its function is as follows. Binds directly to 23S rRNA. The L1 stalk is quite mobile in the ribosome, and is involved in E site tRNA release. In terms of biological role, protein L1 is also a translational repressor protein, it controls the translation of the L11 operon by binding to its mRNA. This is Large ribosomal subunit protein uL1 from Rickettsia rickettsii (strain Iowa).